Reading from the N-terminus, the 555-residue chain is Formate--tetrahydrofolate ligase (555 aa).

This sequence belongs to the formate--tetrahydrofolate ligase family.

It catalyses the reaction (6S)-5,6,7,8-tetrahydrofolate + formate + ATP = (6R)-10-formyltetrahydrofolate + ADP + phosphate. The protein operates within one-carbon metabolism; tetrahydrofolate interconversion. The chain is Formate--tetrahydrofolate ligase from Porphyromonas gingivalis (strain ATCC BAA-308 / W83).